Here is a 421-residue protein sequence, read N- to C-terminus: Heterogeneous nuclear ribonucleoprotein 27C (421 aa).

RRM domains lie at 7-88 and 96-173; these read GKLF…RTLQ and YKVF…KAEP. Disordered stretches follow at residues 171–191 and 240–373; these read AEPRDGSGGQNSNNSTVGGAY and GTSP…SEYD. A Phosphoserine modification is found at S177. Positions 240 to 250 are enriched in polar residues; it reads GTSPQQQQYGY. The span at 264–273 shows a compositional bias: pro residues; that stretch reads PPGPQGPPPQ. The segment covering 275–284 has biased composition (polar residues); that stretch reads SNYAGPQQTQ. A compositionally biased stretch (low complexity) spans 293–302; the sequence is NSTSTGAPSG. S366, S368, and S370 each carry phosphoserine. A Phosphotyrosine modification is found at Y372. S379 is subject to Phosphoserine. Residues 392-421 are disordered; it reads EGASNYGAGPRSAYGNDSSTQPPYATSQAV. Polar residues predominate over residues 406–421; that stretch reads GNDSSTQPPYATSQAV.

In terms of assembly, interacts with sqd; the interaction is RNA-dependent and may be specific for sqd isoform A/sqdA. Interacts with otu; the interaction is RNA-independent.

The protein localises to the nucleus. Its subcellular location is the cytoplasm. Its function is as follows. This protein is a component of ribonucleosomes. Could be needed to organize a concentration gradient of a dorsalizing morphogen (Dm) originating in the germinal vesicle. Interacts with grk mRNA (via 3' UTR) and involved in its localization to the dorsal anterior region of the oocyte during dorsal-ventral axis determination; may function as a ribonuclear protein complex together with sqd and otu. Required for polytene chromosome dispersal in nurse cells during oogenesis. May be involved in the regulation of splicing. The protein is Heterogeneous nuclear ribonucleoprotein 27C of Drosophila melanogaster (Fruit fly).